The following is a 276-amino-acid chain: Large ribosomal subunit protein uL2 (276 aa).

Residues 219 to 268 form a disordered region; that stretch reads TVRGSVMNPNDHPHGGGEGRQPVGRKSPMTPWGKPALGLKTRNKKAKSSK.

Belongs to the universal ribosomal protein uL2 family. As to quaternary structure, part of the 50S ribosomal subunit. Forms a bridge to the 30S subunit in the 70S ribosome.

Its function is as follows. One of the primary rRNA binding proteins. Required for association of the 30S and 50S subunits to form the 70S ribosome, for tRNA binding and peptide bond formation. It has been suggested to have peptidyltransferase activity; this is somewhat controversial. Makes several contacts with the 16S rRNA in the 70S ribosome. The polypeptide is Large ribosomal subunit protein uL2 (Lactococcus lactis subsp. cremoris (strain MG1363)).